Consider the following 347-residue polypeptide: N-acetyl-gamma-glutamyl-phosphate reductase (347 aa).

C150 is a catalytic residue.

This sequence belongs to the NAGSA dehydrogenase family. Type 1 subfamily.

The protein resides in the cytoplasm. It catalyses the reaction N-acetyl-L-glutamate 5-semialdehyde + phosphate + NADP(+) = N-acetyl-L-glutamyl 5-phosphate + NADPH + H(+). Its pathway is amino-acid biosynthesis; L-arginine biosynthesis; N(2)-acetyl-L-ornithine from L-glutamate: step 3/4. Functionally, catalyzes the NADPH-dependent reduction of N-acetyl-5-glutamyl phosphate to yield N-acetyl-L-glutamate 5-semialdehyde. The protein is N-acetyl-gamma-glutamyl-phosphate reductase of Halothermothrix orenii (strain H 168 / OCM 544 / DSM 9562).